Reading from the N-terminus, the 423-residue chain is Mannose-6-phosphate isomerase (423 aa).

At Ala2 the chain carries N-acetylalanine. Ser102 and Ser108 each carry phosphoserine. Positions 110, 112, 137, and 276 each coordinate Zn(2+). Arg295 is a catalytic residue.

This sequence belongs to the mannose-6-phosphate isomerase type 1 family. The cofactor is Zn(2+). Expressed in all tissues, but more abundant in heart, brain and skeletal muscle.

It localises to the cytoplasm. The catalysed reaction is D-mannose 6-phosphate = D-fructose 6-phosphate. It participates in nucleotide-sugar biosynthesis; GDP-alpha-D-mannose biosynthesis; alpha-D-mannose 1-phosphate from D-fructose 6-phosphate: step 1/2. Functionally, isomerase that catalyzes the interconversion of fructose-6-P and mannose-6-P and has a critical role in the supply of D-mannose derivatives required for many eukaryotic glycosylation reactions. The polypeptide is Mannose-6-phosphate isomerase (Homo sapiens (Human)).